The chain runs to 175 residues: Ribosome maturation factor RimM (175 aa).

The PRC barrel domain occupies 94-166; sequence SDSWYEHELI…FIRLVPPGGL (73 aa).

Belongs to the RimM family. In terms of assembly, binds ribosomal protein uS19.

The protein resides in the cytoplasm. Its function is as follows. An accessory protein needed during the final step in the assembly of 30S ribosomal subunit, possibly for assembly of the head region. Essential for efficient processing of 16S rRNA. May be needed both before and after RbfA during the maturation of 16S rRNA. It has affinity for free ribosomal 30S subunits but not for 70S ribosomes. The protein is Ribosome maturation factor RimM of Renibacterium salmoninarum (strain ATCC 33209 / DSM 20767 / JCM 11484 / NBRC 15589 / NCIMB 2235).